Reading from the N-terminus, the 477-residue chain is Bifunctional protein HldE (477 aa).

The ribokinase stretch occupies residues 1-318 (MKVNLPAFER…ENAVRGRADT (318 aa)). Residue 195 to 198 (NLSE) participates in ATP binding. Asp-264 is an active-site residue. The segment at 344–477 (MTNGVFDILH…IKKIQTESEK (134 aa)) is cytidylyltransferase.

In the N-terminal section; belongs to the carbohydrate kinase PfkB family. The protein in the C-terminal section; belongs to the cytidylyltransferase family. As to quaternary structure, homodimer.

It catalyses the reaction D-glycero-beta-D-manno-heptose 7-phosphate + ATP = D-glycero-beta-D-manno-heptose 1,7-bisphosphate + ADP + H(+). It carries out the reaction D-glycero-beta-D-manno-heptose 1-phosphate + ATP + H(+) = ADP-D-glycero-beta-D-manno-heptose + diphosphate. It participates in nucleotide-sugar biosynthesis; ADP-L-glycero-beta-D-manno-heptose biosynthesis; ADP-L-glycero-beta-D-manno-heptose from D-glycero-beta-D-manno-heptose 7-phosphate: step 1/4. The protein operates within nucleotide-sugar biosynthesis; ADP-L-glycero-beta-D-manno-heptose biosynthesis; ADP-L-glycero-beta-D-manno-heptose from D-glycero-beta-D-manno-heptose 7-phosphate: step 3/4. Catalyzes the phosphorylation of D-glycero-D-manno-heptose 7-phosphate at the C-1 position to selectively form D-glycero-beta-D-manno-heptose-1,7-bisphosphate. In terms of biological role, catalyzes the ADP transfer from ATP to D-glycero-beta-D-manno-heptose 1-phosphate, yielding ADP-D-glycero-beta-D-manno-heptose. This Salmonella enteritidis PT4 (strain P125109) protein is Bifunctional protein HldE.